The following is a 340-amino-acid chain: Sodium/bile acid cotransporter 7 (340 aa).

Residues M1–E10 are Cytoplasmic-facing. The chain crosses the membrane as a helical span at residues W11 to V31. At N32–K37 the chain is on the extracellular side. The chain crosses the membrane as a helical span at residues P38 to L58. At K59–K71 the chain is on the cytoplasmic side. The chain crosses the membrane as a helical span at residues L72–L92. Topologically, residues Q93 to P116 are extracellular. Residues P117–F137 traverse the membrane as a helical segment. A topological domain (cytoplasmic) is located at residue N138. Residues S139–G159 traverse the membrane as a helical segment. The Extracellular portion of the chain corresponds to S160 to S163. The helical transmembrane segment at V164–G184 threads the bilayer. Residues Q185 to P201 are Cytoplasmic-facing. A helical transmembrane segment spans residues F202 to F222. The Extracellular segment spans residues S223–L234. Residues I235 to F255 form a helical membrane-spanning segment. Residues S256 to A270 lie on the Cytoplasmic side of the membrane. The chain crosses the membrane as a helical span at residues I271 to F291. Over A292–S298 the chain is Extracellular. The chain crosses the membrane as a helical span at residues L299–V319. Over P320–V340 the chain is Cytoplasmic.

This sequence belongs to the bile acid:sodium symporter (BASS) (TC 2.A.28) family. Strongly expressed in liver, adrenal gland, small intestine and colon. Moderately expressed in heart, lung, kidney and spleen. Weakly expressed in brain.

Its subcellular location is the cell membrane. It localises to the endoplasmic reticulum membrane. The protein localises to the golgi apparatus membrane. Functionally, involved in teeth and skeletal development. Has an essential role in the biosynthesis and trafficking of glycosaminoglycans and glycoproteins to produce a proper functioning extracellular matrix. Required for extracellular matrix mineralization. Also involved in the regulation of cellular calcium homeostasis. Does not show transport activity towards bile acids or steroid sulfates (including taurocholate, cholate, chenodeoxycholate, estrone-3-sulfate, dehydroepiandrosterone sulfate (DHEAS) and pregnenolone sulfate). The polypeptide is Sodium/bile acid cotransporter 7 (Slc10a7) (Rattus norvegicus (Rat)).